The following is a 251-amino-acid chain: Pyruvate formate-lyase-activating enzyme (251 aa).

Residues 15–244 form the Radical SAM core domain; sequence VDGPGLRYIL…KEAYRYVNFN (230 aa). [4Fe-4S] cluster is bound by residues Cys29, Cys33, and Cys36. Residues 35–37, Gly79, 134–136, and His207 each bind S-adenosyl-L-methionine; these read YCH and DIK.

It belongs to the organic radical-activating enzymes family. It depends on [4Fe-4S] cluster as a cofactor.

It is found in the cytoplasm. It carries out the reaction glycyl-[formate C-acetyltransferase] + reduced [flavodoxin] + S-adenosyl-L-methionine = glycin-2-yl radical-[formate C-acetyltransferase] + semiquinone [flavodoxin] + 5'-deoxyadenosine + L-methionine + H(+). Its function is as follows. Activation of pyruvate formate-lyase under anaerobic conditions by generation of an organic free radical, using S-adenosylmethionine and reduced flavodoxin as cosubstrates to produce 5'-deoxy-adenosine. In Staphylococcus epidermidis (strain ATCC 12228 / FDA PCI 1200), this protein is Pyruvate formate-lyase-activating enzyme (pflA).